Reading from the N-terminus, the 333-residue chain is D-alanine--D-alanine ligase (333 aa).

The region spanning 124–329 (KMWFSALGIP…FTEYLYSNIK (206 aa)) is the ATP-grasp domain. Position 154 to 209 (154 to 209 (ALETWGSVFIKAASQGSSVGCYRVDSIDELASSLKEAFSYSPYVVVEKTIHARELE)) interacts with ATP. Mg(2+) contacts are provided by D283, E296, and N298.

It belongs to the D-alanine--D-alanine ligase family. Mg(2+) is required as a cofactor. Mn(2+) serves as cofactor.

It is found in the cytoplasm. The enzyme catalyses 2 D-alanine + ATP = D-alanyl-D-alanine + ADP + phosphate + H(+). Its pathway is cell wall biogenesis; peptidoglycan biosynthesis. Cell wall formation. This Shewanella sediminis (strain HAW-EB3) protein is D-alanine--D-alanine ligase.